Here is a 280-residue protein sequence, read N- to C-terminus: F420-dependent methylenetetrahydromethanopterin dehydrogenase (280 aa).

This sequence belongs to the MTD family.

The enzyme catalyses 5,10-methylenetetrahydromethanopterin + oxidized coenzyme F420-(gamma-L-Glu)(n) + 2 H(+) = 5,10-methenyl-5,6,7,8-tetrahydromethanopterin + reduced coenzyme F420-(gamma-L-Glu)(n). The protein operates within one-carbon metabolism; methanogenesis from CO(2); 5,10-methylene-5,6,7,8-tetrahydromethanopterin from 5,10-methenyl-5,6,7,8-tetrahydromethanopterin (coenzyme F420 route): step 1/1. Catalyzes the reversible reduction of methenyl-H(4)MPT(+) to methylene-H(4)MPT. The sequence is that of F420-dependent methylenetetrahydromethanopterin dehydrogenase from Methanocorpusculum labreanum (strain ATCC 43576 / DSM 4855 / Z).